The chain runs to 330 residues: MSSVKNILSFVALFAGVKTAYAGLNSPGHNNVAIYWGADVDVIPLAFAVSIKGPGGVPQINFSNQGDPCKPFPGTDLLHCPQIGEDIKTCQKKGKTILLSIGGATYSEGGFRSAEDAVAGANLLWDTFGPVKSSNSSVLRPFDDAVIDGFDLDFEATVLNMVPFAKQLRTLYDAEKSKTFYLTAAPQCPYPDLYNKEMLEGGVKFDALFIQFYNNFCGLNNFVLGSQSQDKFNFAEWDNFAKKVSANPDVKIMVGAPANKGAASSGYIDAQTLVSVINWSKTFSSFGGVMMWDASQAWANGNFTSAVKGALSAGNSRVVRMSYAGYHSGY.

An N-terminal signal peptide occupies residues 1 to 22 (MSSVKNILSFVALFAGVKTAYA). Residues 23–314 (GLNSPGHNNV…SAVKGALSAG (292 aa)) enclose the GH18 domain. N-linked (GlcNAc...) asparagine glycans are attached at residues asparagine 61 and asparagine 135. Residue glutamate 155 is the Proton donor of the active site. Residues asparagine 278 and asparagine 302 are each glycosylated (N-linked (GlcNAc...) asparagine).

The protein belongs to the glycosyl hydrolase 18 family. Chitinase class III subfamily. Monomer.

The protein localises to the secreted. It carries out the reaction Random endo-hydrolysis of N-acetyl-beta-D-glucosaminide (1-&gt;4)-beta-linkages in chitin and chitodextrins.. Secreted chitinase involved in the degradation of chitin, a component of the cell walls of fungi and exoskeletal elements of some animals (including worms and arthropods). Plays a morphogenetic role during apical growth, cell division and differentiation (cell wall morphogenesis). This is Class III chitinase ARB_03514 from Arthroderma benhamiae (strain ATCC MYA-4681 / CBS 112371) (Trichophyton mentagrophytes).